The chain runs to 287 residues: ATP synthase gamma chain (287 aa).

The protein belongs to the ATPase gamma chain family. As to quaternary structure, F-type ATPases have 2 components, CF(1) - the catalytic core - and CF(0) - the membrane proton channel. CF(1) has five subunits: alpha(3), beta(3), gamma(1), delta(1), epsilon(1). CF(0) has three main subunits: a, b and c.

It localises to the cell inner membrane. Produces ATP from ADP in the presence of a proton gradient across the membrane. The gamma chain is believed to be important in regulating ATPase activity and the flow of protons through the CF(0) complex. The chain is ATP synthase gamma chain from Salmonella agona (strain SL483).